Reading from the N-terminus, the 214-residue chain is Phosphatidylserine decarboxylase proenzyme (214 aa).

S182 acts as the Schiff-base intermediate with substrate; via pyruvic acid in catalysis. At S182 the chain carries Pyruvic acid (Ser); by autocatalysis.

This sequence belongs to the phosphatidylserine decarboxylase family. PSD-A subfamily. As to quaternary structure, heterodimer of a large membrane-associated beta subunit and a small pyruvoyl-containing alpha subunit. It depends on pyruvate as a cofactor. Post-translationally, is synthesized initially as an inactive proenzyme. Formation of the active enzyme involves a self-maturation process in which the active site pyruvoyl group is generated from an internal serine residue via an autocatalytic post-translational modification. Two non-identical subunits are generated from the proenzyme in this reaction, and the pyruvate is formed at the N-terminus of the alpha chain, which is derived from the carboxyl end of the proenzyme. The post-translation cleavage follows an unusual pathway, termed non-hydrolytic serinolysis, in which the side chain hydroxyl group of the serine supplies its oxygen atom to form the C-terminus of the beta chain, while the remainder of the serine residue undergoes an oxidative deamination to produce ammonia and the pyruvoyl prosthetic group on the alpha chain.

It is found in the cell membrane. The catalysed reaction is a 1,2-diacyl-sn-glycero-3-phospho-L-serine + H(+) = a 1,2-diacyl-sn-glycero-3-phosphoethanolamine + CO2. It functions in the pathway phospholipid metabolism; phosphatidylethanolamine biosynthesis; phosphatidylethanolamine from CDP-diacylglycerol: step 2/2. Functionally, catalyzes the formation of phosphatidylethanolamine (PtdEtn) from phosphatidylserine (PtdSer). The polypeptide is Phosphatidylserine decarboxylase proenzyme (Burkholderia multivorans (strain ATCC 17616 / 249)).